Consider the following 1279-residue polypeptide: ATP-dependent helicase/nuclease subunit A (1279 aa).

Residues 4–499 (TKWTDEQRQA…VKLFKNFRSR (496 aa)) enclose the UvrD-like helicase ATP-binding domain. 25-32 (AGAGAGKT) contacts ATP. In terms of domain architecture, UvrD-like helicase C-terminal spans 526–853 (EEALKVGASY…RIMSIHKSKG (328 aa)).

This sequence belongs to the helicase family. AddA subfamily. In terms of assembly, heterodimer of AddA and AddB/RexB. The cofactor is Mg(2+).

It carries out the reaction Couples ATP hydrolysis with the unwinding of duplex DNA by translocating in the 3'-5' direction.. The catalysed reaction is ATP + H2O = ADP + phosphate + H(+). Functionally, the heterodimer acts as both an ATP-dependent DNA helicase and an ATP-dependent, dual-direction single-stranded exonuclease. Recognizes the chi site generating a DNA molecule suitable for the initiation of homologous recombination. The AddA nuclease domain is required for chi fragment generation; this subunit has the helicase and 3' -&gt; 5' nuclease activities. This is ATP-dependent helicase/nuclease subunit A from Clostridium botulinum (strain Loch Maree / Type A3).